The chain runs to 179 residues: uncharacterized protein (179 aa).

The tract at residues 1 to 32 is disordered; sequence MELQGAQEDLGISLSSPRRNHETRPGSKAKGR.

This is an uncharacterized protein from Homo sapiens (Human).